The following is a 310-amino-acid chain: Methionyl-tRNA formyltransferase (310 aa).

Residue 110–113 (SLLP) participates in (6S)-5,6,7,8-tetrahydrofolate binding.

Belongs to the Fmt family.

It carries out the reaction L-methionyl-tRNA(fMet) + (6R)-10-formyltetrahydrofolate = N-formyl-L-methionyl-tRNA(fMet) + (6S)-5,6,7,8-tetrahydrofolate + H(+). In terms of biological role, attaches a formyl group to the free amino group of methionyl-tRNA(fMet). The formyl group appears to play a dual role in the initiator identity of N-formylmethionyl-tRNA by promoting its recognition by IF2 and preventing the misappropriation of this tRNA by the elongation apparatus. The polypeptide is Methionyl-tRNA formyltransferase (Streptomyces griseus subsp. griseus (strain JCM 4626 / CBS 651.72 / NBRC 13350 / KCC S-0626 / ISP 5235)).